The sequence spans 255 residues: tRNA uridine(34) hydroxylase (255 aa).

In terms of domain architecture, Rhodanese spans 125 to 219 (AAPDTLLIDT…YLEGIPESES (95 aa)). Catalysis depends on cysteine 179, which acts as the Cysteine persulfide intermediate.

It belongs to the TrhO family.

The catalysed reaction is uridine(34) in tRNA + AH2 + O2 = 5-hydroxyuridine(34) in tRNA + A + H2O. Functionally, catalyzes oxygen-dependent 5-hydroxyuridine (ho5U) modification at position 34 in tRNAs. This chain is tRNA uridine(34) hydroxylase, found in Nitrobacter hamburgensis (strain DSM 10229 / NCIMB 13809 / X14).